The sequence spans 75 residues: Large ribosomal subunit protein bL28 (75 aa).

The protein belongs to the bacterial ribosomal protein bL28 family.

This chain is Large ribosomal subunit protein bL28, found in Buchnera aphidicola subsp. Acyrthosiphon pisum (strain 5A).